We begin with the raw amino-acid sequence, 1232 residues long: MGKKMMTTDGNTATAHVAYAMSEVAAIYPITPSSTMGEEADDWAAQGRKNIFGQTLTIREMQSEAGAAGAVHGALAAGALTTTFTASQGLLLMIPNMYKISGELLPGVFHVTARAIAAHALSIFGDHQDIYAARQTGFAMLASSSVQEAHDMALVAHLAAIESNVPFMHFFDGFRTSHEIQKIEVLDYADMASLVNQKALAEFRAKSMNPEHPHVRGTAQNPDIYFQGREAANPYYLKVPGIVAEYMQKVASLTGRSYKLFDYVGAPDAERVIVSMGSSCETIEEVINHLAAKGEKIGLIKVRLYRPFVSEAFFAALPASAKVITVLDRTKEPGAPGDPLYLDVCSAFVERGEAMPKILAGRYGLGSKEFSPAMVKSVYDNMSGAKKNHFTVGIEDDVTGTSLPVDNAFADTTPKGTIQCQFWGLGADGTVGANKQAIKIIGDNTDLFAQGYFSYDSKKSGGITISHLRFGEKPIQSTYLVNRADYVACHNPAYVGIYDILEGIKDGGTFVLNSPWSSLEDMDKHLPSGIKRTIANKKLKFYNIDAVKIATDVGLGGRINMIMQTAFFKLAGVLPFEKAVDLLKKSIHKAYGKKGEKIVKMNTDAVDQAVTSLQEFKYPDSWKDAPAETKAEPMTNEFFKNVVKPILTQQGDKLPVSAFEADGRFPLGTSQFEKRGVAINVPQWVPENCIQCNQCAFVCPHSAILPVLAKEEELVGAPANFTALEAKGKELKGYKFRIQINTLDCMGCGNCADICPPKEKALVMQPLDTQRDAQVPNLEYAARIPVKSEVLPRDSLKGSQFQEPLMEFSGACSGCGETPYVRVITQLFGERMFIANATGCSSIWGASAPSMPYKTNRLGQGPAWGNSLFEDAAEYGFGMNMSMFARRTHLADLAAKALESDASGDVKEALQGWLAGKNDPIKSKEYGDKLKKLLAGQKDGLLGQIAAMSDLYTKKSVWIFGGDGWAYDIGYGGLDHVLASGEDVNVFVMDTEVYSNTGGQSSKATPTGAVAKFAAAGKRTGKKDLARMVMTYGYVYVATVSMGYSKQQFLKVLKEAESFPGPSLVIAYATCINQGLRKGMGKSQDVMNTAVKSGYWPLFRYDPRLAAQGKNPFQLDSKAPDGSVEEFLMAQNRFAVLDRSFPEDAKRLRAQVAHELDVRFKELEHMAATNIFESFAPAGGKADGSVDFGEGAEFCTRDDTPMMARPDSGEACDQNRAGTSEQQGDLSKRTKK.

Threonine 31 contacts pyruvate. Residue glutamate 64 participates in thiamine diphosphate binding. Pyruvate is bound at residue arginine 114. CoA is bound by residues 427–431 (ADGTV), lysine 459, asparagine 560, and asparagine 602. 2 consecutive 4Fe-4S ferredoxin-type domains span residues 680–709 (NVPQWVPENCIQCNQCAFVCPHSAILPVLA) and 736–767 (FRIQINTLDCMGCGNCADICPPKEKALVMQPL). 10 residues coordinate [4Fe-4S] cluster: cysteine 689, cysteine 692, cysteine 695, cysteine 699, cysteine 745, cysteine 748, cysteine 751, cysteine 755, cysteine 812, and cysteine 815. Thiamine diphosphate-binding positions include glutamate 817, cysteine 840, and 962-965 (GDGW). Cysteine 840 is a [4Fe-4S] cluster binding site. A Mg(2+)-binding site is contributed by aspartate 963. The Ca(2+) site is built by aspartate 983 and asparagine 985. Residues threonine 991 and valine 993 each contribute to the Mg(2+) site. Residue 991–996 (TEVYSN) participates in thiamine diphosphate binding. 4 residues coordinate Ca(2+): alanine 1056, phenylalanine 1059, glycine 1061, and serine 1063. Cysteine 1071 provides a ligand contact to [4Fe-4S] cluster. Cysteine 1195 and cysteine 1212 form a disulfide bridge. Residues 1197–1232 (RDDTPMMARPDSGEACDQNRAGTSEQQGDLSKRTKK) are disordered. A compositionally biased stretch (polar residues) spans 1216 to 1225 (RAGTSEQQGD).

Belongs to the pyruvate:ferredoxin/flavodoxin oxidoreductase family. Homodimer. [4Fe-4S] cluster serves as cofactor. Thiamine diphosphate is required as a cofactor. Requires Mg(2+) as cofactor.

The protein localises to the cytoplasm. The enzyme catalyses 2 oxidized [2Fe-2S]-[ferredoxin] + pyruvate + CoA = 2 reduced [2Fe-2S]-[ferredoxin] + acetyl-CoA + CO2 + H(+). Its function is as follows. Catalyzes the ferredoxin-dependent oxidative decarboxylation of pyruvate. Required for the transfer of electrons from pyruvate to ferredoxin. Ferredoxin I and ferredoxin II, which are single 4Fe-4S cluster ferredoxins are the most effective electron carriers of POR. The protein is Pyruvate:ferredoxin oxidoreductase of Desulfocurvibacter africanus (Desulfovibrio africanus).